We begin with the raw amino-acid sequence, 272 residues long: Putative phosphoenolpyruvate synthase regulatory protein (272 aa).

152-159 (GVSRCGKT) contributes to the ADP binding site.

Belongs to the pyruvate, phosphate/water dikinase regulatory protein family. PSRP subfamily.

The catalysed reaction is [pyruvate, water dikinase] + ADP = [pyruvate, water dikinase]-phosphate + AMP + H(+). The enzyme catalyses [pyruvate, water dikinase]-phosphate + phosphate + H(+) = [pyruvate, water dikinase] + diphosphate. Bifunctional serine/threonine kinase and phosphorylase involved in the regulation of the phosphoenolpyruvate synthase (PEPS) by catalyzing its phosphorylation/dephosphorylation. This is Putative phosphoenolpyruvate synthase regulatory protein from Pseudomonas putida (strain GB-1).